The sequence spans 930 residues: MPSFVLWTFHLCSQWFQGLTDLLPHIPDTQTVNNFASQTGLLYPGGMKYSKIASWVCIPLLTCRGVDATNSADGGSELQLNESPFSKNWQVLGPFEIGTRESSWGADPLEAYGGFQTLQYDPKASFDSSLALNGLANWSMASTHVNSTANPPETILDINLSPDNLTSLQEVYGWDAKQYQAWARGTLTVSKSNSVVALYTDRIWEYRIDNKSYFGGDFFGFRRAPLLLDLSPGTHTVDLRVVRDVRALGAVGEPFINVTLIAQELSKTLIVDKKSILVADVVENRLISPHASVTLHNTMGNPVDVAARFSLKMLNNNVKLEEAQSRAIGFTIEAKDKINVPSSVSLYFEYTTPDDSSVQRTQTMTITFTRRKLPEVQQNTFMLPGGVVSYATMRPPTSLECNKDKSAKLPVLLGLHGAGQAASDEIIRTMLDGVSDICAWTLFPSGVTPWSGDDWHTWGFADLQHSVRALNDYIKYSGWTGVGLIDGDWIIAGHSNGGQGTWYTISHYPDKIIAAAPVAGYTSIENYVPYSMWHNTDSLLASTFYRARQDFKHEILVDNFAGIPVYQQHGASDDNVVVYHSRLMHRLLQESGSPSKYHEVPGKNHWYTGIMTSDFLKDFYRTYVQRPNATDLLPQRFSVTLPPAGHMGTRGGIYVDQSHTPDRVGSIEVERGMANDGVWKLKTRNIRRFHLETSAIRSHVPLYIQIDGSRFTVTPSNSTTTWYTQDAAGKWTSGGDSWRTISQRYGRQAGVNAFLRTEAPFTVTAAAQETRDLALQTCRNLFQYLSADCIISYAVPTANSTTATSPAGNNVVILLGAQPNGYTAGDSAISISARSLDIKTSQGTTSYPFEPGLGAIFIRPLVNERLELVIWGSDMAGLQQAARLVPVLTGVGQPDFVVVNKGTPLKGQGSLYAAGFFDSEWKVSAASYVS.

A signal peptide spans 1-20; the sequence is MPSFVLWTFHLCSQWFQGLT. N-linked (GlcNAc...) asparagine glycosylation is found at N137, N146, N164, N210, N257, N628, N717, and N799.

The protein resides in the secreted. This is an uncharacterized protein from Arthroderma benhamiae (strain ATCC MYA-4681 / CBS 112371) (Trichophyton mentagrophytes).